The primary structure comprises 198 residues: Inner membrane-spanning protein YciB (198 aa).

Transmembrane regions (helical) follow at residues 36 to 56 (IYSATAVLIISSVVVYGAIFI), 67 to 87 (LTLVACLVFGSLTLAFHSETF), 90 to 110 (WKAPVVNWLFALAFIGSHFIG), 135 to 155 (VAWIVFFLFCGAANLFVAFTF), and 162 to 182 (FKVFGSLGMTVLFLVAQGIYL).

The protein belongs to the YciB family.

It localises to the cell inner membrane. Plays a role in cell envelope biogenesis, maintenance of cell envelope integrity and membrane homeostasis. The sequence is that of Inner membrane-spanning protein YciB from Pseudomonas fluorescens (strain SBW25).